We begin with the raw amino-acid sequence, 112 residues long: Large ribosomal subunit protein P2A (112 aa).

Residues glycine 83 to aspartate 112 form a disordered region. The segment covering glutamate 89 to glutamate 98 has biased composition (basic and acidic residues).

The protein belongs to the eukaryotic ribosomal protein P1/P2 family. In terms of assembly, P1 and P2 exist as dimers at the large ribosomal subunit. Post-translationally, phosphorylated.

Functionally, plays an important role in the elongation step of protein synthesis. The sequence is that of Large ribosomal subunit protein P2A (RPP2A) from Zea mays (Maize).